Consider the following 374-residue polypeptide: Peptide chain release factor 2 (374 aa).

Gln-254 carries the N5-methylglutamine modification.

The protein belongs to the prokaryotic/mitochondrial release factor family. Post-translationally, methylated by PrmC. Methylation increases the termination efficiency of RF2.

The protein localises to the cytoplasm. Functionally, peptide chain release factor 2 directs the termination of translation in response to the peptide chain termination codons UGA and UAA. This is Peptide chain release factor 2 from Renibacterium salmoninarum (strain ATCC 33209 / DSM 20767 / JCM 11484 / NBRC 15589 / NCIMB 2235).